The following is a 770-amino-acid chain: MLPPSGFAGLVPPSHFQARPLPTLPRMAPTWASDVPLVQSPASQDVLERRLDAQRSTVTTWGQDFCGDGQGLGRRGRSLELGFSSALSQQAELISRQLQELRRLEEEVRSLRETSLQQKMRLETQAVELDALAVAEKAGQAEAEGLRTALAGAEMVRKNLEEAKHKELEEIQSLHQEQLSSLTQAHQKALDSLASKAEGLEKSLNSLETKRAGEAKQLAMAQKEADMLRNQLSKTQEELEAQVTLVESLRKYVGEQVLPEFPSQEWELERKELLDTLKHLKEDRADLQATVELLQVRVQSLTHMLALQEEELTRKIQPLDPLEPEFPKKCRSLLRNWREKVFALMVQLKAQDLQHRDSTSQLRIQVAELQEQVTSQSQEQAILQRALQDKTAQVEVERMSTKSLQMELDQAQEARRRQEQQIASAEEQLKFVVGAMNSTQAKLQSTMTRMDQAVARIPSLSNRLSYAVRKVHTIKGLMARKVALAQLRVESSPPSEAAPPLDTDLSVELEQLREERNRLDAELQLSAHLIQQEVGRAREQGEVERRRLIEVAQQLEQELQRAQESLASVGQQLEAARRGQQESTEEAASLRQELTQQQEIYGQALQEKVAEVETRLREQLSDTKRRLNEARREQAKAVVSLRQIQHKATQEKERNQELRRLQDEARKEEGQRLTRRVQELERDKNLMLQRLLAVLPSGVNKKCSPRSVESSSSESPAAASCKESVKGSLTVLLDNLQGLSEAISRDEDICVEDNQNTKKTKNPPSDPLLS.

3 coiled-coil regions span residues S56–A289, L334–Q420, and G476–E669. Disordered regions lie at residues L573 to Q592, L641 to R672, N700 to C721, and S744 to S770. Residues A648 to R672 are compositionally biased toward basic and acidic residues. Residues K701–C721 show a composition bias toward low complexity.

It localises to the cytoplasm. The protein resides in the nucleus. May be a regulator of keratinocyte proliferation or differentiation. The protein is Coiled-coil alpha-helical rod protein 1 (Cchcr1) of Mus musculus (Mouse).